Here is a 99-residue protein sequence, read N- to C-terminus: Nucleoid-associated protein MGAS2096_Spy1605 (99 aa).

This sequence belongs to the YbaB/EbfC family. As to quaternary structure, homodimer.

It localises to the cytoplasm. The protein localises to the nucleoid. Functionally, binds to DNA and alters its conformation. May be involved in regulation of gene expression, nucleoid organization and DNA protection. This is Nucleoid-associated protein MGAS2096_Spy1605 from Streptococcus pyogenes serotype M12 (strain MGAS2096).